Reading from the N-terminus, the 314-residue chain is Nodulation protein D 1 (314 aa).

One can recognise an HTH lysR-type domain in the interval 6 to 63 (LDLNLLVALDAVMTARNLTAAARKINLSQPAMSAAIARLRTYFRDELFTMRGRELVPT). Residues 23–42 (LTAAARKINLSQPAMSAAIA) constitute a DNA-binding region (H-T-H motif).

The protein belongs to the LysR transcriptional regulatory family.

Functionally, nodD regulates the expression of the nodABCFE genes which encode other nodulation proteins. NodD is also a negative regulator of its own expression. Binds flavonoids as inducers. The sequence is that of Nodulation protein D 1 (nodD1) from Bradyrhizobium diazoefficiens (strain JCM 10833 / BCRC 13528 / IAM 13628 / NBRC 14792 / USDA 110).